Reading from the N-terminus, the 236-residue chain is Osmoprotectant import permease protein OsmY (236 aa).

6 helical membrane passes run 9–29 (VLGF…GIGL), 47–67 (LMLV…SGIL), 95–115 (VLAL…VALF), 126–146 (TYAG…GIGM), 180–200 (PLAF…GIYL), and 207–227 (ILGA…LAWF). Residues 43-224 (GQRHLMLVFT…LFALILDTLL (182 aa)) form the ABC transmembrane type-1 domain.

This sequence belongs to the binding-protein-dependent transport system permease family. As to quaternary structure, the complex is composed of two ATP-binding proteins (OsmV), two transmembrane proteins (OsmW and OsmY) and a solute-binding protein (OsmX).

Its subcellular location is the cell inner membrane. Its function is as follows. Part of the OsmU ABC transporter complex, which is involved in the uptake of osmoprotectants such as choline-O-sulfate and glycine betaine. Probably responsible for the translocation of the substrate across the membrane. The sequence is that of Osmoprotectant import permease protein OsmY (osmY) from Salmonella typhimurium (strain LT2 / SGSC1412 / ATCC 700720).